A 105-amino-acid chain; its full sequence is MAIRYPMAVGLNKGHRVTKNVTKPRHCRRRGRLTKHTKFVRDMIREVCGFAPYERRAMELLKVSKDKRALKFIKKRIGTHIRAKRKREELSNVLAAMRKAAAKKD.

Belongs to the eukaryotic ribosomal protein eL36 family. As to quaternary structure, component of the large ribosomal subunit.

The protein localises to the cytoplasm. It is found in the cytosol. Functionally, component of the large ribosomal subunit. The ribosome is a large ribonucleoprotein complex responsible for the synthesis of proteins in the cell. The chain is Large ribosomal subunit protein eL36 (rpl36) from Xenopus laevis (African clawed frog).